The primary structure comprises 215 residues: Sperm acrosome membrane-associated protein 3 (215 aa).

Topologically, residues 1 to 63 (MVSALRGAPL…EARSRALRRR (63 aa)) are cytoplasmic. Residues 64-84 (WCPAGIMLLALVCLLSCLLPS) form a helical; Signal-anchor for type II membrane protein membrane-spanning segment. The Extracellular portion of the chain corresponds to 85 to 215 (SEAKLYGRCE…LTEWVDGCDF (131 aa)). The C-type lysozyme domain maps to 88–215 (KLYGRCELAR…LTEWVDGCDF (128 aa)). Cystine bridges form between Cys-93-Cys-213, Cys-117-Cys-201, Cys-151-Cys-166, and Cys-162-Cys-180.

The protein belongs to the glycosyl hydrolase 22 family. As to quaternary structure, interacts with ASTL. The processed form derives from the membrane form by proteolytic processing. As to expression, the processed form is expressed in sperm (at protein level). Expressed in testis, epididymis and placenta.

Its subcellular location is the cytoplasmic vesicle. It is found in the secretory vesicle. The protein localises to the acrosome membrane. The protein resides in the secreted. Functionally, sperm surface membrane protein that may be involved in sperm-egg plasma membrane adhesion and fusion during fertilization. It could be a potential receptor for the egg oligosaccharide residue N-acetylglucosamine, which is present in the extracellular matrix over the egg plasma membrane. The processed form has no detectable bacteriolytic activity in vitro. This is Sperm acrosome membrane-associated protein 3 (SPACA3) from Homo sapiens (Human).